A 574-amino-acid chain; its full sequence is Galectin-3-binding protein (574 aa).

The N-terminal stretch at Met1–Gly18 is a signal peptide. The SRCR domain maps to Met24–Ser124. Intrachain disulfides connect Cys49–Cys113, Cys62–Cys123, and Cys93–Cys103. N-linked (GlcNAc...) asparagine glycosylation is found at Asn69, Asn96, Asn102, and Asn125. Residues Cys153–Met221 enclose the BTB domain. The region spanning Pro260–Gln360 is the BACK domain. Asn362, Asn398, Asn540, and Asn569 each carry an N-linked (GlcNAc...) asparagine glycan.

Homodimers and homomultimers. The multimers form ring-like structures with a diameter of 30-40 nm. Binds LGALS1 and LGALS3. Binds ITGB1, COL4A1, COL5A1, COL6A1, FN1 and NID. The unglycosylated form interacts with PDE4DIP; this interaction, which is PDE4DIP isoform-specific, may connect a pericentrosomal complex to the gamma-tubulin ring complex (gamma-TuRC) to promote microtubule assembly and acetylation. Detected in thyroid (at protein level).

The protein resides in the secreted. The protein localises to the extracellular space. It is found in the extracellular matrix. Its function is as follows. Promotes integrin-mediated cell adhesion. May stimulate host defense against viruses and tumor cells. The polypeptide is Galectin-3-binding protein (Lgals3bp) (Rattus norvegicus (Rat)).